A 111-amino-acid polypeptide reads, in one-letter code: Guanylate cyclase activator 2B (111 aa).

The N-terminal stretch at 1–26 (MGSRTLLGHLSVLAVVLLLLLQGTQS) is a signal peptide. Residues 27-96 (VDIKYQGYQV…SILQALRTMD (70 aa)) constitute a propeptide that is removed on maturation. 3 cysteine pairs are disulfide-bonded: Cys-67-Cys-80, Cys-100-Cys-108, and Cys-103-Cys-111.

This sequence belongs to the guanylin family.

The protein resides in the secreted. Functionally, endogenous activator of intestinal guanylate cyclase. It stimulates this enzyme through the same receptor binding region as the heat-stable enterotoxins. May be a potent physiological regulator of intestinal fluid and electrolyte transport. May be an autocrine/paracrine regulator of intestinal salt and water transport. The protein is Guanylate cyclase activator 2B (GUCA2B) of Cavia porcellus (Guinea pig).